We begin with the raw amino-acid sequence, 147 residues long: UPF0306 protein YhbP (147 aa).

Belongs to the UPF0306 family.

The polypeptide is UPF0306 protein YhbP (Escherichia coli O157:H7 (strain EC4115 / EHEC)).